A 162-amino-acid chain; its full sequence is Phosphopantetheine adenylyltransferase (162 aa).

Threonine 14 contributes to the substrate binding site. Residues 14-15 (TF) and histidine 22 each bind ATP. Substrate contacts are provided by lysine 46, leucine 78, and arginine 92. ATP-binding positions include 93-95 (GLR), glutamate 103, and 128-134 (HSFISSS).

It belongs to the bacterial CoaD family. In terms of assembly, homohexamer. It depends on Mg(2+) as a cofactor.

Its subcellular location is the cytoplasm. The enzyme catalyses (R)-4'-phosphopantetheine + ATP + H(+) = 3'-dephospho-CoA + diphosphate. Its pathway is cofactor biosynthesis; coenzyme A biosynthesis; CoA from (R)-pantothenate: step 4/5. Functionally, reversibly transfers an adenylyl group from ATP to 4'-phosphopantetheine, yielding dephospho-CoA (dPCoA) and pyrophosphate. In Xylella fastidiosa (strain M23), this protein is Phosphopantetheine adenylyltransferase.